Reading from the N-terminus, the 126-residue chain is Large ribosomal subunit protein bL17 (126 aa).

This sequence belongs to the bacterial ribosomal protein bL17 family. As to quaternary structure, part of the 50S ribosomal subunit. Contacts protein L32.

The protein is Large ribosomal subunit protein bL17 of Vibrio atlanticus (strain LGP32) (Vibrio splendidus (strain Mel32)).